Here is a 446-residue protein sequence, read N- to C-terminus: Dimethylsulfoniopropionate lyase DddP (446 aa).

Over residues 1-13 the composition is skewed to basic and acidic residues; that stretch reads MNQHYSETRKIDP. The disordered stretch occupies residues 1–30; sequence MNQHYSETRKIDPSRGATLGDNTPNDNNRI. 6 residues coordinate a divalent metal cation: aspartate 295, aspartate 297, aspartate 307, histidine 371, glutamate 406, and glutamate 421.

This sequence belongs to the peptidase M24B family. As to quaternary structure, homodimer. Requires a divalent metal cation as cofactor.

The enzyme catalyses S,S-dimethyl-beta-propiothetin = acrylate + dimethyl sulfide + H(+). Able to cleave dimethylsulfoniopropionate (DMSP), releasing dimethyl sulfide (DMS). DMS is the principal form by which sulfur is transported from oceans to the atmosphere. The real activity of the protein is however subject to debate and it is unclear whether it constitutes a real dimethylsulfoniopropionate lyase in vivo: the low activity with DMSP as substrate suggests that DMSP is not its native substrate. The polypeptide is Dimethylsulfoniopropionate lyase DddP (Roseovarius nubinhibens (strain ATCC BAA-591 / DSM 15170 / ISM)).